The chain runs to 161 residues: Large ribosomal subunit protein uL15 (161 aa).

The tract at residues 1 to 43 (MKLSDIADNAGSRKKRMRIGRGIGSGKGKTGGRGGKGQTARSG) is disordered. Over residues 21–37 (RGIGSGKGKTGGRGGKG) the composition is skewed to gly residues.

This sequence belongs to the universal ribosomal protein uL15 family. Part of the 50S ribosomal subunit.

Its function is as follows. Binds to the 23S rRNA. The sequence is that of Large ribosomal subunit protein uL15 from Nitrobacter hamburgensis (strain DSM 10229 / NCIMB 13809 / X14).